A 114-amino-acid polypeptide reads, in one-letter code: Large ribosomal subunit protein uL22 (114 aa).

This sequence belongs to the universal ribosomal protein uL22 family. In terms of assembly, part of the 50S ribosomal subunit.

Its function is as follows. This protein binds specifically to 23S rRNA; its binding is stimulated by other ribosomal proteins, e.g. L4, L17, and L20. It is important during the early stages of 50S assembly. It makes multiple contacts with different domains of the 23S rRNA in the assembled 50S subunit and ribosome. The globular domain of the protein is located near the polypeptide exit tunnel on the outside of the subunit, while an extended beta-hairpin is found that lines the wall of the exit tunnel in the center of the 70S ribosome. The chain is Large ribosomal subunit protein uL22 from Streptococcus suis (strain 98HAH33).